Consider the following 342-residue polypeptide: Cell division protein FtsQ (342 aa).

Residues 1-80 (MDGAGSLTRS…ALVERYLPRR (80 aa)) lie on the Cytoplasmic side of the membrane. The chain crosses the membrane as a helical span at residues 81 to 99 (VGISMTVLLLIGSCGFGIV). The Periplasmic segment spans residues 100-342 (KGGHLQDFVT…KKKKKAGDAA (243 aa)). In terms of domain architecture, POTRA spans 124-192 (FRITSVVING…GQLMIELTER (69 aa)).

The protein belongs to the FtsQ/DivIB family. FtsQ subfamily.

The protein resides in the cell inner membrane. In terms of biological role, essential cell division protein. This chain is Cell division protein FtsQ, found in Bradyrhizobium diazoefficiens (strain JCM 10833 / BCRC 13528 / IAM 13628 / NBRC 14792 / USDA 110).